The chain runs to 109 residues: uncharacterized protein (109 aa).

The protein belongs to the archaeal ATPase family.

This is an uncharacterized protein from Methanocaldococcus jannaschii (strain ATCC 43067 / DSM 2661 / JAL-1 / JCM 10045 / NBRC 100440) (Methanococcus jannaschii).